Reading from the N-terminus, the 398-residue chain is Elongation factor Tu (398 aa).

The 198-residue stretch at 10 to 207 folds into the tr-type G domain; it reads KPHVNIGTIG…TVDEYIPEPE (198 aa). A G1 region spans residues 19–26; that stretch reads GHVDHGKT. 19–26 provides a ligand contact to GTP; it reads GHVDHGKT. Threonine 26 is a Mg(2+) binding site. Positions 63–67 are G2; that stretch reads GITIN. The tract at residues 84–87 is G3; that stretch reads DAPG. GTP-binding positions include 84-88 and 139-142; these read DAPGH and NKVD. The segment at 139–142 is G4; the sequence is NKVD. Positions 177 to 179 are G5; it reads SAL.

This sequence belongs to the TRAFAC class translation factor GTPase superfamily. Classic translation factor GTPase family. EF-Tu/EF-1A subfamily. In terms of assembly, monomer.

The protein resides in the cytoplasm. The catalysed reaction is GTP + H2O = GDP + phosphate + H(+). In terms of biological role, GTP hydrolase that promotes the GTP-dependent binding of aminoacyl-tRNA to the A-site of ribosomes during protein biosynthesis. The chain is Elongation factor Tu from Streptococcus pyogenes serotype M49 (strain NZ131).